The primary structure comprises 148 residues: Small ribosomal subunit protein eS12B (148 aa).

It belongs to the eukaryotic ribosomal protein eS12 family. In terms of assembly, component of the small ribosomal subunit (SSU). Mature yeast ribosomes consist of a small (40S) and a large (60S) subunit. The 40S small subunit contains 1 molecule of ribosomal RNA (18S rRNA) and at least 33 different proteins. The large 60S subunit contains 3 rRNA molecules (25S, 5.8S and 5S rRNA) and at least 46 different proteins.

It is found in the cytoplasm. In terms of biological role, component of the ribosome, a large ribonucleoprotein complex responsible for the synthesis of proteins in the cell. The small ribosomal subunit (SSU) binds messenger RNAs (mRNAs) and translates the encoded message by selecting cognate aminoacyl-transfer RNA (tRNA) molecules. The large subunit (LSU) contains the ribosomal catalytic site termed the peptidyl transferase center (PTC), which catalyzes the formation of peptide bonds, thereby polymerizing the amino acids delivered by tRNAs into a polypeptide chain. The nascent polypeptides leave the ribosome through a tunnel in the LSU and interact with protein factors that function in enzymatic processing, targeting, and the membrane insertion of nascent chains at the exit of the ribosomal tunnel. This Schizosaccharomyces pombe (strain 972 / ATCC 24843) (Fission yeast) protein is Small ribosomal subunit protein eS12B (rps1202).